Consider the following 248-residue polypeptide: 5'-nucleotidase SurE (248 aa).

Residues D8, D9, S39, and N91 each contribute to the a divalent metal cation site.

Belongs to the SurE nucleotidase family. It depends on a divalent metal cation as a cofactor.

It is found in the cytoplasm. It catalyses the reaction a ribonucleoside 5'-phosphate + H2O = a ribonucleoside + phosphate. Its function is as follows. Nucleotidase that shows phosphatase activity on nucleoside 5'-monophosphates. The sequence is that of 5'-nucleotidase SurE from Citrifermentans bemidjiense (strain ATCC BAA-1014 / DSM 16622 / JCM 12645 / Bem) (Geobacter bemidjiensis).